The following is a 219-amino-acid chain: Peroxiredoxin (219 aa).

In terms of domain architecture, Thioredoxin spans P2–K164. Catalysis depends on C44, which acts as the Cysteine sulfenic acid (-SOH) intermediate. R127 lines the substrate pocket. C206 and C212 are disulfide-bonded.

This sequence belongs to the peroxiredoxin family. Prx6 subfamily. Homodecamer. Pentamer of dimers that assemble into a ring structure.

It localises to the cytoplasm. The catalysed reaction is a hydroperoxide + [thioredoxin]-dithiol = an alcohol + [thioredoxin]-disulfide + H2O. Functionally, thiol-specific peroxidase that catalyzes the reduction of hydrogen peroxide and organic hydroperoxides to water and alcohols, respectively. Plays a role in cell protection against oxidative stress by detoxifying peroxides. The protein is Peroxiredoxin of Methanosarcina mazei (strain ATCC BAA-159 / DSM 3647 / Goe1 / Go1 / JCM 11833 / OCM 88) (Methanosarcina frisia).